A 163-amino-acid polypeptide reads, in one-letter code: Small ribosomal subunit protein uS5 (163 aa).

One can recognise an S5 DRBM domain in the interval L11 to V74.

The protein belongs to the universal ribosomal protein uS5 family. As to quaternary structure, part of the 30S ribosomal subunit. Contacts proteins S4 and S8.

With S4 and S12 plays an important role in translational accuracy. Functionally, located at the back of the 30S subunit body where it stabilizes the conformation of the head with respect to the body. This Syntrophotalea carbinolica (strain DSM 2380 / NBRC 103641 / GraBd1) (Pelobacter carbinolicus) protein is Small ribosomal subunit protein uS5.